Consider the following 210-residue polypeptide: Small ribosomal subunit protein uS3 (210 aa).

Residues 38-106 form the KH type-2 domain; that stretch reads IRAFLKKRLY…EIFINIIEVR (69 aa).

It belongs to the universal ribosomal protein uS3 family. In terms of assembly, part of the 30S ribosomal subunit. Forms a tight complex with proteins S10 and S14.

Binds the lower part of the 30S subunit head. Binds mRNA in the 70S ribosome, positioning it for translation. This Pelobacter propionicus (strain DSM 2379 / NBRC 103807 / OttBd1) protein is Small ribosomal subunit protein uS3.